Consider the following 228-residue polypeptide: Ribose-5-phosphate isomerase A (228 aa).

Substrate-binding positions include 32 to 35, 85 to 88, and 98 to 101; these read TGST, DGAD, and KGGG. Glu-107 acts as the Proton acceptor in catalysis. Residue Lys-125 coordinates substrate.

It belongs to the ribose 5-phosphate isomerase family. Homodimer.

The catalysed reaction is aldehydo-D-ribose 5-phosphate = D-ribulose 5-phosphate. Its pathway is carbohydrate degradation; pentose phosphate pathway; D-ribose 5-phosphate from D-ribulose 5-phosphate (non-oxidative stage): step 1/1. Catalyzes the reversible conversion of ribose-5-phosphate to ribulose 5-phosphate. The polypeptide is Ribose-5-phosphate isomerase A (Cupriavidus taiwanensis (strain DSM 17343 / BCRC 17206 / CCUG 44338 / CIP 107171 / LMG 19424 / R1) (Ralstonia taiwanensis (strain LMG 19424))).